The sequence spans 975 residues: Translation initiation factor IF-2 (975 aa).

A compositionally biased stretch (basic and acidic residues) spans 48 to 63 (DHLRKSHGATDGDKRK). Disordered stretches follow at residues 48–84 (DHLR…GKAR) and 98–388 (KRDD…QAPT). Low complexity predominate over residues 104–115 (ETGADQAQAQTD). Positions 120-177 (AELKRREEEARREAELLEKQAQELRERQERLEREEAERRAREEAAEAERRRAEEEAAA) are enriched in basic and acidic residues. Over residues 178-211 (KRAAAAQAEAAQQAAAAREQAQRAQSEPAEQSAQ) the composition is skewed to low complexity. Positions 212–263 (DEARAAAERAAQREAAKKAEDAAREAADKARAEQEEIRKRREAAEAEARAIR) are enriched in basic and acidic residues. The span at 302–330 (KPAGEAAAARPAAKKPASGAPAPAAAPAG) shows a compositional bias: low complexity. Positions 359–372 (SSGGVDRGWRGGPK) are enriched in gly residues. The tr-type G domain occupies 475 to 644 (PRPPVVTVMG…LLQAEVLELK (170 aa)). The tract at residues 484 to 491 (GHVDHGKT) is G1. GTP is bound at residue 484–491 (GHVDHGKT). Residues 509–513 (GITQH) are G2. The G3 stretch occupies residues 530-533 (DTPG). Residues 530-534 (DTPGH) and 584-587 (NKID) contribute to the GTP site. The segment at 584 to 587 (NKID) is G4. The interval 620–622 (SAK) is G5.

The protein belongs to the TRAFAC class translation factor GTPase superfamily. Classic translation factor GTPase family. IF-2 subfamily.

Its subcellular location is the cytoplasm. Its function is as follows. One of the essential components for the initiation of protein synthesis. Protects formylmethionyl-tRNA from spontaneous hydrolysis and promotes its binding to the 30S ribosomal subunits. Also involved in the hydrolysis of GTP during the formation of the 70S ribosomal complex. The sequence is that of Translation initiation factor IF-2 from Burkholderia mallei (strain NCTC 10247).